Reading from the N-terminus, the 272-residue chain is Probable ribosomal RNA small subunit methyltransferase A (272 aa).

S-adenosyl-L-methionine contacts are provided by asparagine 23, leucine 25, glycine 50, glutamate 71, aspartate 95, and asparagine 110.

It belongs to the class I-like SAM-binding methyltransferase superfamily. rRNA adenine N(6)-methyltransferase family. RsmA subfamily.

The protein localises to the cytoplasm. Functionally, specifically dimethylates two adjacent adenosines in the loop of a conserved hairpin near the 3'-end of 16S rRNA in the 30S particle. May play a critical role in biogenesis of 30S subunits. This is Probable ribosomal RNA small subunit methyltransferase A from Thermococcus onnurineus (strain NA1).